Here is an 891-residue protein sequence, read N- to C-terminus: uncharacterized protein (891 aa).

This is an uncharacterized protein from Ictalurid herpesvirus 1 (strain Auburn) (IcHV-1).